A 293-amino-acid chain; its full sequence is uncharacterized protein (293 aa).

The 60-residue stretch at 1 to 60 (MHITLRQLEVFAEVLKSGSTTQASVMLALSQSAVSAALTDLEGQLGVQLFDRVGKRLVVN) folds into the HTH lysR-type domain. The H-T-H motif DNA-binding region spans 20–39 (TTQASVMLALSQSAVSAALT).

It belongs to the LysR transcriptional regulatory family.

This is an uncharacterized protein from Escherichia coli O157:H7.